The sequence spans 312 residues: Glyoxylate/hydroxypyruvate reductase A (312 aa).

Residue R227 is part of the active site. H275 (proton donor) is an active-site residue.

It belongs to the D-isomer specific 2-hydroxyacid dehydrogenase family. GhrA subfamily.

Its subcellular location is the cytoplasm. It catalyses the reaction glycolate + NADP(+) = glyoxylate + NADPH + H(+). The catalysed reaction is (R)-glycerate + NAD(+) = 3-hydroxypyruvate + NADH + H(+). The enzyme catalyses (R)-glycerate + NADP(+) = 3-hydroxypyruvate + NADPH + H(+). Its function is as follows. Catalyzes the NADPH-dependent reduction of glyoxylate and hydroxypyruvate into glycolate and glycerate, respectively. This chain is Glyoxylate/hydroxypyruvate reductase A, found in Escherichia coli (strain UTI89 / UPEC).